We begin with the raw amino-acid sequence, 469 residues long: Adenosylhomocysteinase (469 aa).

Substrate contacts are provided by Thr-63, Asp-139, and Glu-164. 165–167 (TTT) lines the NAD(+) pocket. Substrate-binding residues include Lys-194 and Asp-198. NAD(+)-binding positions include Asn-199, 228–233 (GYGDVG), Glu-251, Asn-300, 321–323 (IGH), and Asn-375.

The protein belongs to the adenosylhomocysteinase family. Requires NAD(+) as cofactor.

The protein localises to the cytoplasm. The catalysed reaction is S-adenosyl-L-homocysteine + H2O = L-homocysteine + adenosine. It participates in amino-acid biosynthesis; L-homocysteine biosynthesis; L-homocysteine from S-adenosyl-L-homocysteine: step 1/1. Functionally, may play a key role in the regulation of the intracellular concentration of adenosylhomocysteine. This chain is Adenosylhomocysteinase, found in Ectopseudomonas mendocina (strain ymp) (Pseudomonas mendocina).